The following is a 520-amino-acid chain: U3 small nucleolar RNA-associated protein 15 homolog (520 aa).

WD repeat units lie at residues 36–75 (KEFG…PIKT), 78–117 (RFKD…PLRQ), 120–159 (GHTK…EIVS), 162–202 (EHSD…SVMT), 204–242 (EHGH…QLLV), 246–285 (NHHK…VVHS), and 287–326 (NYAT…SKEK).

As to quaternary structure, part of the small subunit (SSU) processome, composed of more than 70 proteins and the RNA chaperone small nucleolar RNA (snoRNA) U3. May be a component of the proposed t-UTP subcomplex of the ribosomal small subunit (SSU) processome.

It is found in the nucleus. The protein localises to the nucleolus. Its function is as follows. Ribosome biogenesis factor. Involved in nucleolar processing of pre-18S ribosomal RNA. Required for optimal pre-ribosomal RNA transcription by RNA polymerase I. Part of the small subunit (SSU) processome, first precursor of the small eukaryotic ribosomal subunit. During the assembly of the SSU processome in the nucleolus, many ribosome biogenesis factors, an RNA chaperone and ribosomal proteins associate with the nascent pre-rRNA and work in concert to generate RNA folding, modifications, rearrangements and cleavage as well as targeted degradation of pre-ribosomal RNA by the RNA exosome. The polypeptide is U3 small nucleolar RNA-associated protein 15 homolog (UTP15) (Gallus gallus (Chicken)).